The sequence spans 316 residues: Acetyl-coenzyme A carboxylase carboxyl transferase subunit alpha (316 aa).

The CoA carboxyltransferase C-terminal domain occupies 39–293 (RLQDKSKALT…RGELLTQLKM (255 aa)).

This sequence belongs to the AccA family. As to quaternary structure, acetyl-CoA carboxylase is a heterohexamer composed of biotin carboxyl carrier protein (AccB), biotin carboxylase (AccC) and two subunits each of ACCase subunit alpha (AccA) and ACCase subunit beta (AccD).

The protein resides in the cytoplasm. It catalyses the reaction N(6)-carboxybiotinyl-L-lysyl-[protein] + acetyl-CoA = N(6)-biotinyl-L-lysyl-[protein] + malonyl-CoA. It functions in the pathway lipid metabolism; malonyl-CoA biosynthesis; malonyl-CoA from acetyl-CoA: step 1/1. Component of the acetyl coenzyme A carboxylase (ACC) complex. First, biotin carboxylase catalyzes the carboxylation of biotin on its carrier protein (BCCP) and then the CO(2) group is transferred by the carboxyltransferase to acetyl-CoA to form malonyl-CoA. This Pseudomonas aeruginosa (strain LESB58) protein is Acetyl-coenzyme A carboxylase carboxyl transferase subunit alpha.